The sequence spans 380 residues: Cell division protein ZipA (380 aa).

Topologically, residues 1–7 (MEDNFRN) are periplasmic. The chain crosses the membrane as a helical span at residues 8-28 (VLIILSAIVITAIFIHGLWTL). Over 29-380 (RKQKNPYKLK…DRKSRIALVE (352 aa)) the chain is Cytoplasmic.

The protein belongs to the ZipA family. Interacts with FtsZ via their C-terminal domains.

The protein resides in the cell inner membrane. Essential cell division protein that stabilizes the FtsZ protofilaments by cross-linking them and that serves as a cytoplasmic membrane anchor for the Z ring. Also required for the recruitment to the septal ring of downstream cell division proteins. The protein is Cell division protein ZipA of Colwellia psychrerythraea (strain 34H / ATCC BAA-681) (Vibrio psychroerythus).